Consider the following 114-residue polypeptide: MSEKPREIKTRFPVARIKKLMQSDDDIGKVAQATPTAVAKALELFMISLIEETCNQARMRNSKRVSPSHLKQAVLETEQFDFLQDIVSKHPDAVAPATGEEEQPKRRGRKPAQE.

The tract at residues 91 to 114 is disordered; the sequence is PDAVAPATGEEEQPKRRGRKPAQE.

Heterotetramer. Consists of four subunits: POL2, DPB2, DPB3 and DPB4.

The protein resides in the nucleus. As accessory component of the DNA polymerase epsilon (DNA polymerase II) participates in chromosomal DNA replication. The chain is DNA polymerase epsilon subunit C (DPB3) from Yarrowia lipolytica (strain CLIB 122 / E 150) (Yeast).